The primary structure comprises 540 residues: Fumonisin B1 esterase (540 aa).

Serine 240 acts as the Acyl-ester intermediate in catalysis. Active-site charge relay system residues include glutamate 356 and histidine 448. A disordered region spans residues 521–540; the sequence is QVGSGEGLGVSPSKACQPSK.

The protein belongs to the type-B carboxylesterase/lipase family.

It carries out the reaction fumonisin B1 + 2 H2O = 2 tricarballylate + (2S,3S,5R,10R,12S,14S,15R,16R)-2-amino-12,16-dimethylicosane-3,5,10,14,15-pentol + 2 H(+). Functionally, involved in degradation of fumonisin B1. Catalyzes the hydrolysis of fumonisin B1 (FB1) to aminopentol (HFB1). This Sphingopyxis macrogoltabida (Sphingomonas macrogoltabidus) protein is Fumonisin B1 esterase (fumD).